The sequence spans 156 residues: Insulin (156 aa).

A signal peptide spans 1–31 (MSKFLLQSHSANACLLTLLLTLASNLDISLA). 4 disulfides stabilise this stretch: C37/C114, C49/C119, C61/C128, and C112/C115. Positions 79 to 93 (DTENVNDKLRGILLN) are cleaved as a propeptide — c peptide beta. The propeptide at 96–102 (EAFSYLT) is c peptide alpha. A propeptide spans 141–156 (TGRSNSGHAQLEDNFS) (d peptide). The propeptide at 144 to 156 (SNSGHAQLEDNFS) is d peptide short form. E152 bears the 4-carboxyglutamate mark.

It belongs to the insulin family. In terms of assembly, heterodimer of a B chain or a B chain' and an A chain probably linked by three disulfide bonds. As to expression, expressed in the central region of the cerebral ganglia mostly within the F and C clusters.

The protein localises to the secreted. In terms of biological role, involved in glucose metabolism. This Aplysia californica (California sea hare) protein is Insulin (PIN).